A 738-amino-acid polypeptide reads, in one-letter code: Putative cyclic nucleotide-gated ion channel 7 (738 aa).

Over 1–104 (MYKSQYISGQ…DKTLLVWNRL (104 aa)) the chain is Cytoplasmic. The chain crosses the membrane as a helical span at residues 105-125 (FVISCILAVSVDPLFFYLPIV). The Extracellular portion of the chain corresponds to 126 to 139 (DNSGSSCIGIDTKL). Residues 140–160 (AVTTTTLRTIVDVFYLTRMAL) form a helical membrane-spanning segment. Over 161 to 193 (QFRTAYIAPSSRVFGRGELVIDPAKIAERYLTR) the chain is Cytoplasmic. A helical transmembrane segment spans residues 194 to 214 (YFVVDFLAVLPLPQIAVWKFL). The Extracellular portion of the chain corresponds to 215–227 (HGSKGSDVLPTKT). Residues 228–248 (ALLNIVIVQYIPRFVRFIPLT) form a helical membrane-spanning segment. Residues 249–268 (SELKKTAGAFAEGAWAGAAY) lie on the Cytoplasmic side of the membrane. A helical membrane pass occupies residues 269-289 (YLLWYMLASHITGAFWYMLSV). Residues 290 to 395 (ERNDTCWRFA…GQGLQTSTFP (106 aa)) lie on the Extracellular side of the membrane. Residues 396–416 (GEVLFSIAIAIAGLLLFALLI) form a helical membrane-spanning segment. Residues 417–738 (GNMQTYLQSL…KPPEPDFDAE (322 aa)) lie on the Cytoplasmic side of the membrane. Residues 502–632 (LFAN…TFRF) and E573 contribute to the a nucleoside 3',5'-cyclic phosphate site. The tract at residues 618–633 (FRRLHSRQVQQTFRFY) is calmodulin-binding. In terms of domain architecture, IQ spans 638-667 (RTWASCFIQAAWRRYSRRKNAELRRIEEKE). Disordered stretches follow at residues 671–693 (GYED…SESS) and 715–738 (LRSS…FDAE).

This sequence belongs to the cyclic nucleotide-gated cation channel (TC 1.A.1.5) family. As to quaternary structure, homotetramer or heterotetramer.

Its subcellular location is the cell membrane. Putative cyclic nucleotide-gated ion channel. The sequence is that of Putative cyclic nucleotide-gated ion channel 7 (CNGC7) from Arabidopsis thaliana (Mouse-ear cress).